The chain runs to 706 residues: Protein argonaute (706 aa).

Residues 1 to 108 (MGKEALLNLY…ELFRDFLTKT (108 aa)) form an N-terminal domain region. Positions 109 to 165 (KVKDKFISDFYKKFRDKITVQGKNRKIALIPEVNEKVLKSEEGYFLLHLDLKFRIQP) are linker L1. One can recognise a PAZ domain in the interval 168–259 (TLQTLLERND…YPATILKPVL (92 aa)). Residues 263 to 334 (NLEDEERNEV…AKGKNTKVIT (72 aa)) are linker L2. Residues 335 to 448 (NLRKFLELCR…YDFVKRELLK (114 aa)) form a mid domain region. One can recognise a Piwi domain in the interval 419-694 (LVIVFLEEYP…ITKLMLRGIE (276 aa)). The interval 449-706 (KMIPSQVILN…KKEGDIMYWL (258 aa)) is PIWI domain. Residues Asp502, Glu541, and Asp571 contribute to the active site. Asp502 provides a ligand contact to Mn(2+). Asp571 serves as a coordination point for Mn(2+). Positions 612–650 (FIKGYFYKLSEDSVILATYNQVYEGTHQPIKVRKVYGEL) are PIWI box. Asp683 is a catalytic residue. Residue Asp683 coordinates Mn(2+).

Belongs to the argonaute family. Long pAgo subfamily. It depends on Mg(2+) as a cofactor.

A DNA-guided RNA endonuclease. Uses short ssDNA sequences as guides (gDNA) to bind complementary target strands, resulting in cleavage of the target RNA. The cleavage site is 10 nucleotides downstream of the residue base paired with the 5'-end of the gDNA. Binds ssDNA better than ssRNA, binds dsDNA and DNA-RNA hybrids but does not bind dsRNA. A 2 nucleotide 3'-overhang (possibly on the guide strand) may help load nucleic acids into the complex. The protein is Protein argonaute of Aquifex aeolicus (strain VF5).